The sequence spans 416 residues: NADH-quinone oxidoreductase subunit D (416 aa).

Belongs to the complex I 49 kDa subunit family. In terms of assembly, NDH-1 is composed of 14 different subunits. Subunits NuoB, C, D, E, F, and G constitute the peripheral sector of the complex.

Its subcellular location is the cell inner membrane. It carries out the reaction a quinone + NADH + 5 H(+)(in) = a quinol + NAD(+) + 4 H(+)(out). NDH-1 shuttles electrons from NADH, via FMN and iron-sulfur (Fe-S) centers, to quinones in the respiratory chain. The immediate electron acceptor for the enzyme in this species is believed to be ubiquinone. Couples the redox reaction to proton translocation (for every two electrons transferred, four hydrogen ions are translocated across the cytoplasmic membrane), and thus conserves the redox energy in a proton gradient. The chain is NADH-quinone oxidoreductase subunit D from Caulobacter sp. (strain K31).